A 491-amino-acid chain; its full sequence is Arginine decarboxylase (491 aa).

Lys-227 carries the post-translational modification N6-(pyridoxal phosphate)lysine.

This sequence belongs to the Orn/Lys/Arg decarboxylase class-I family. The cofactor is pyridoxal 5'-phosphate.

The protein localises to the cytoplasm. It catalyses the reaction L-arginine + H(+) = agmatine + CO2. Its pathway is amine and polyamine biosynthesis; agmatine biosynthesis; agmatine from L-arginine: step 1/1. In terms of biological role, catalyzes the formation of agmatine from arginine. The polypeptide is Arginine decarboxylase (speA) (Halalkalibacterium halodurans (strain ATCC BAA-125 / DSM 18197 / FERM 7344 / JCM 9153 / C-125) (Bacillus halodurans)).